We begin with the raw amino-acid sequence, 689 residues long: Glycine--tRNA ligase beta subunit (689 aa).

It belongs to the class-II aminoacyl-tRNA synthetase family. Tetramer of two alpha and two beta subunits.

The protein resides in the cytoplasm. The enzyme catalyses tRNA(Gly) + glycine + ATP = glycyl-tRNA(Gly) + AMP + diphosphate. In Mannheimia succiniciproducens (strain KCTC 0769BP / MBEL55E), this protein is Glycine--tRNA ligase beta subunit.